Reading from the N-terminus, the 232-residue chain is Orotate phosphoribosyltransferase (232 aa).

5-phospho-alpha-D-ribose 1-diphosphate-binding positions include Arg107, Lys108, Lys111, His113, and 133-141; that span reads EDLTTAGGS. Position 137 (Thr137) interacts with orotate.

It belongs to the purine/pyrimidine phosphoribosyltransferase family. PyrE subfamily. In terms of assembly, homodimer. Requires Mg(2+) as cofactor.

It catalyses the reaction orotidine 5'-phosphate + diphosphate = orotate + 5-phospho-alpha-D-ribose 1-diphosphate. The protein operates within pyrimidine metabolism; UMP biosynthesis via de novo pathway; UMP from orotate: step 1/2. Its function is as follows. Catalyzes the transfer of a ribosyl phosphate group from 5-phosphoribose 1-diphosphate to orotate, leading to the formation of orotidine monophosphate (OMP). The polypeptide is Orotate phosphoribosyltransferase (Agrobacterium fabrum (strain C58 / ATCC 33970) (Agrobacterium tumefaciens (strain C58))).